A 343-amino-acid polypeptide reads, in one-letter code: Uroporphyrinogen decarboxylase (343 aa).

Substrate contacts are provided by residues 23 to 27 (RQAGR), D73, Y150, S205, and H322.

It belongs to the uroporphyrinogen decarboxylase family. In terms of assembly, homodimer.

The protein resides in the cytoplasm. It carries out the reaction uroporphyrinogen III + 4 H(+) = coproporphyrinogen III + 4 CO2. It participates in porphyrin-containing compound metabolism; protoporphyrin-IX biosynthesis; coproporphyrinogen-III from 5-aminolevulinate: step 4/4. Its function is as follows. Catalyzes the decarboxylation of four acetate groups of uroporphyrinogen-III to yield coproporphyrinogen-III. The chain is Uroporphyrinogen decarboxylase from Cereibacter sphaeroides (strain KD131 / KCTC 12085) (Rhodobacter sphaeroides).